Reading from the N-terminus, the 175-residue chain is Endoribonuclease YbeY (175 aa).

Residues His-121, His-125, and His-131 each contribute to the Zn(2+) site. The interval Pro-154–Pro-175 is disordered. The segment covering Pro-159–Pro-175 has biased composition (polar residues).

Belongs to the endoribonuclease YbeY family. Zn(2+) is required as a cofactor.

It localises to the cytoplasm. In terms of biological role, single strand-specific metallo-endoribonuclease involved in late-stage 70S ribosome quality control and in maturation of the 3' terminus of the 16S rRNA. The polypeptide is Endoribonuclease YbeY (Alcanivorax borkumensis (strain ATCC 700651 / DSM 11573 / NCIMB 13689 / SK2)).